We begin with the raw amino-acid sequence, 274 residues long: Penicillin-insensitive murein endopeptidase (274 aa).

The signal sequence occupies residues 1–19 (MNKTAIALLALLASSASLA). 3 disulfide bridges follow: Cys-44–Cys-265, Cys-187–Cys-235, and Cys-216–Cys-223. The Zn(2+) site is built by His-110, His-113, Asp-120, Asp-147, His-150, and His-211. Residues 228-265 (LPPPGDGCGAELQSWFAPPKPGTTKPEKKTPPPLPPSC) are disordered.

The protein belongs to the peptidase M74 family. Dimer. Zn(2+) serves as cofactor.

It is found in the periplasm. Its function is as follows. Murein endopeptidase that cleaves the D-alanyl-meso-2,6-diamino-pimelyl amide bond that connects peptidoglycan strands. Likely plays a role in the removal of murein from the sacculus. In Shigella boydii serotype 18 (strain CDC 3083-94 / BS512), this protein is Penicillin-insensitive murein endopeptidase.